Reading from the N-terminus, the 434-residue chain is AT-rich interactive domain-containing protein 5 (434 aa).

A disordered region spans residues 1–120; the sequence is MMADTEMQEQ…SSPHVPEESV (120 aa). 3 stretches are compositionally biased toward basic and acidic residues: residues 25-37, 43-54, and 78-90; these read ELEK…ERPK, DTTHTLDSDVHL, and RNGD…KKIT. The span at 92 to 102 shows a compositional bias: polar residues; it reads DGGQEETTLGE. Positions 142 to 233 constitute an ARID domain; the sequence is PQDQEAFIKE…ALLEYEKHLR (92 aa). The disordered stretch occupies residues 237-274; sequence ELNLPGSASLPSSGIEKEASSHQASGSGRTRRDAAARA. The 99-residue stretch at 336–434 folds into the sHSP domain; sequence AEVIDVGPPA…RLFVRVPFEQ (99 aa).

It belongs to the small heat shock protein (HSP20) family.

Its subcellular location is the nucleus. The protein is AT-rich interactive domain-containing protein 5 (ARID5) of Arabidopsis thaliana (Mouse-ear cress).